A 576-amino-acid polypeptide reads, in one-letter code: MAGUK p55 subfamily member 2 (576 aa).

2 L27 domains span residues 8 to 60 (SETA…FMQQ) and 84 to 142 (LEAV…YETP). The residue at position 42 (serine 42) is a Phosphoserine. Threonine 141 carries the post-translational modification Phosphothreonine. Residue serine 145 is modified to Phosphoserine. The 56-residue stretch at 185 to 240 (ELVIARILHGGMVAQQGLLHVGDIIKEVNGQPVGSDPRALQELLRNASGSVILKIL) folds into the PDZ domain. An SH3 domain is found at 249–317 (PRQVFVKCHF…PSQLLEEKRK (69 aa)). The Guanylate kinase-like domain maps to 374–561 (RKTLVLIGAQ…TFRELQTAME (188 aa)).

This sequence belongs to the MAGUK family. As to quaternary structure, can homomultimerise. Interacts with CACNG2. Interacts (via the SH3-Guanylate kinase-like sub-module) with DLG4/PSD95 and DLGAP1/GKAP. Interacts (via the PDZ domain) with CADM1 (via C-terminus). Interacts with KCNN2/SK2 (via N-terminal domain). Interacts with SRC. In terms of processing, phosphorylated by SRC.

The protein resides in the cytoplasm. It is found in the cytoskeleton. The protein localises to the membrane. Its subcellular location is the cell projection. It localises to the dendrite. The protein resides in the postsynaptic density. In terms of biological role, postsynaptic MAGUK scaffold protein that links CADM1 cell adhesion molecules to core components of the postsynaptic density. In CA1 pyramidal neurons, required for synaptic KCNN2-containing channel function and long-term potentiation expression. Seems to negatively regulate SRC function in epithelial cells. The sequence is that of MAGUK p55 subfamily member 2 from Homo sapiens (Human).